The primary structure comprises 211 residues: Large ribosomal subunit protein uL3 (211 aa).

Belongs to the universal ribosomal protein uL3 family. As to quaternary structure, part of the 50S ribosomal subunit. Forms a cluster with proteins L14 and L19.

One of the primary rRNA binding proteins, it binds directly near the 3'-end of the 23S rRNA, where it nucleates assembly of the 50S subunit. This is Large ribosomal subunit protein uL3 from Citrifermentans bemidjiense (strain ATCC BAA-1014 / DSM 16622 / JCM 12645 / Bem) (Geobacter bemidjiensis).